The following is an 876-amino-acid chain: Leucine--tRNA ligase (876 aa).

The 'HIGH' region motif lies at 43–53 (PYPSGRIHIGH). The 'KMSKS' region motif lies at 632–636 (KMSKS). Lys-635 contacts ATP.

Belongs to the class-I aminoacyl-tRNA synthetase family.

The protein resides in the cytoplasm. It catalyses the reaction tRNA(Leu) + L-leucine + ATP = L-leucyl-tRNA(Leu) + AMP + diphosphate. This is Leucine--tRNA ligase from Allorhizobium ampelinum (strain ATCC BAA-846 / DSM 112012 / S4) (Agrobacterium vitis (strain S4)).